Reading from the N-terminus, the 396-residue chain is Acetate kinase (396 aa).

N7 provides a ligand contact to Mg(2+). An ATP-binding site is contributed by K14. A substrate-binding site is contributed by R88. The active-site Proton donor/acceptor is D145. ATP is bound by residues 205–209, 279–281, and 327–331; these read HLGNG, DFR, and GIGEN. E381 is a Mg(2+) binding site.

Belongs to the acetokinase family. In terms of assembly, homodimer. It depends on Mg(2+) as a cofactor. Mn(2+) is required as a cofactor.

The protein localises to the cytoplasm. It carries out the reaction acetate + ATP = acetyl phosphate + ADP. Its pathway is metabolic intermediate biosynthesis; acetyl-CoA biosynthesis; acetyl-CoA from acetate: step 1/2. Functionally, catalyzes the formation of acetyl phosphate from acetate and ATP. Can also catalyze the reverse reaction. This chain is Acetate kinase, found in Campylobacter jejuni subsp. jejuni serotype O:2 (strain ATCC 700819 / NCTC 11168).